Consider the following 270-residue polypeptide: Acetyl-coenzyme A carboxylase carboxyl transferase subunit beta (270 aa).

In terms of domain architecture, CoA carboxyltransferase N-terminal spans 16-270; the sequence is LFAKCPACKH…KLLAFHGGSK (255 aa). The Zn(2+) site is built by Cys-20, Cys-23, Cys-38, and Cys-41. A C4-type zinc finger spans residues 20-41; it reads CPACKHMIYQKDLGLEKICPKC.

The protein belongs to the AccD/PCCB family. In terms of assembly, acetyl-CoA carboxylase is a heterohexamer composed of biotin carboxyl carrier protein (AccB), biotin carboxylase (AccC) and two subunits each of ACCase subunit alpha (AccA) and ACCase subunit beta (AccD). It depends on Zn(2+) as a cofactor.

The protein localises to the cytoplasm. The enzyme catalyses N(6)-carboxybiotinyl-L-lysyl-[protein] + acetyl-CoA = N(6)-biotinyl-L-lysyl-[protein] + malonyl-CoA. Its pathway is lipid metabolism; malonyl-CoA biosynthesis; malonyl-CoA from acetyl-CoA: step 1/1. Functionally, component of the acetyl coenzyme A carboxylase (ACC) complex. Biotin carboxylase (BC) catalyzes the carboxylation of biotin on its carrier protein (BCCP) and then the CO(2) group is transferred by the transcarboxylase to acetyl-CoA to form malonyl-CoA. This Streptococcus mutans serotype c (strain NN2025) protein is Acetyl-coenzyme A carboxylase carboxyl transferase subunit beta.